The following is a 627-amino-acid chain: Probable inactive receptor kinase At3g02880 (627 aa).

Positions 1–23 (MKYKRKLSLSVVFLFVFYLAAVT) are cleaved as a signal peptide. 5 LRR repeats span residues 91-112 (QLKT…DFSN), 115-137 (LLRY…LFTL), 139-161 (SIIR…VNSA), 163-184 (RLVT…ITLP), and 185-206 (LQQF…LSSW). The tract at residues 222-246 (DTCEAESPNGGDAGGPNTPPEKKDS) is disordered. The chain crosses the membrane as a helical span at residues 253–273 (AIVGIVIGCVVGLLLLLLILF). Positions 345–620 (KASAEVLGKG…LIEEVSHSSG (276 aa)) constitute a Protein kinase domain. S347 carries the phosphoserine modification. Residues 351–359 (LGKGTVGSS) and K373 each bind ATP. Residues 389–409 (LHVLGSMSHANLVTLIAYYFS) form a helical membrane-spanning segment. S424 carries the phosphoserine modification. T444 carries the phosphothreonine modification. Residue S519 is modified to Phosphoserine. Position 595 is a phosphothreonine (T595). Phosphoserine occurs at positions 621 and 626.

It belongs to the protein kinase superfamily. Ser/Thr protein kinase family.

The protein resides in the membrane. The protein is Probable inactive receptor kinase At3g02880 of Arabidopsis thaliana (Mouse-ear cress).